We begin with the raw amino-acid sequence, 417 residues long: Peptidyl-Asp metalloendopeptidase (417 aa).

The first 25 residues, 1–25 (MLSRSIGKAAGGLVLGLSVAAAAHA), serve as a signal peptide directing secretion. H327 is a binding site for Zn(2+). The active site involves E328. Residues H331 and H337 each contribute to the Zn(2+) site.

This sequence belongs to the peptidase M72 family. Requires Zn(2+) as cofactor.

The catalysed reaction is Cleavage of Xaa-|-Asp, Xaa-|-Glu and Xaa-|-cysteic acid bonds.. Its function is as follows. Metalloprotease, specifically cleaves on the N-terminal side of aspartyl, glutamyl and cysteic acid residues. The polypeptide is Peptidyl-Asp metalloendopeptidase (Stenotrophomonas maltophilia (strain K279a)).